The following is a 283-amino-acid chain: Pseudokinase OPG198 (283 aa).

ATP contacts are provided by methionine 1 and lysine 30. The Protein kinase domain maps to 1 to 283 (MESFKYCFDN…DRLRKLFIQD (283 aa)).

It belongs to the protein kinase superfamily. Ser/Thr protein kinase family. Poxviruses subfamily. As to quaternary structure, interacts with B1/VPK1. Interacts with host VRK1. Interacts with host VRK2.

The protein resides in the host nucleus. Both catalytically active kinases B1/VPK1 and host VRK2 repress B12 inhibitory activity in a B1/VPK1 deletion mutant strain. Pseudokinase that plays a role in viral DNA replication repression by activating the antiviral protein BANF1 and inhibiting the activity of host VRK1, a cellular modulator of BANF1. The chain is Pseudokinase OPG198 (OPG198) from Vaccinia virus (strain Western Reserve) (VACV).